We begin with the raw amino-acid sequence, 319 residues long: L-lactate dehydrogenase (319 aa).

Residues valine 17, aspartate 38, lysine 43, tyrosine 69, and glycine 83 to alanine 84 each bind NAD(+). The substrate site is built by glutamine 86 and arginine 92. Residues threonine 105, alanine 122–asparagine 124, and serine 147 each bind NAD(+). A substrate-binding site is contributed by asparagine 124 to aspartate 127. Aspartate 152 to arginine 155 is a binding site for substrate. Positions 157 and 172 each coordinate beta-D-fructose 1,6-bisphosphate. Histidine 179 acts as the Proton acceptor in catalysis. At tyrosine 224 the chain carries Phosphotyrosine. Threonine 233 serves as a coordination point for substrate.

This sequence belongs to the LDH/MDH superfamily. LDH family. As to quaternary structure, homotetramer.

It localises to the cytoplasm. It catalyses the reaction (S)-lactate + NAD(+) = pyruvate + NADH + H(+). It functions in the pathway fermentation; pyruvate fermentation to lactate; (S)-lactate from pyruvate: step 1/1. With respect to regulation, allosterically activated by fructose 1,6-bisphosphate (FBP). Its function is as follows. Catalyzes the conversion of lactate to pyruvate. The chain is L-lactate dehydrogenase from Geobacillus sp. (strain WCH70).